Here is a 446-residue protein sequence, read N- to C-terminus: Oxysterols receptor LXR-beta (446 aa).

Low complexity predominate over residues M1–T28. The tract at residues M1–A69 is disordered. The tract at residues M1–E76 is transactivation AF-1; required for ligand-independent transactivation function. Residues H75 to S152 constitute a DNA-binding region (nuclear receptor). 2 consecutive NR C4-type zinc fingers follow at residues C78–C98 and C116–C140. A disordered region spans residues K160 to E201. Residues P175 to G196 show a composition bias toward low complexity. A transactivation AF-2; required for ligand-dependent transactivation function; mediates interaction with CCAR2 region spans residues L205–E446. Residues A208 to E446 enclose the NR LBD domain. Residues K395 and K433 each participate in a glycyl lysine isopeptide (Lys-Gly) (interchain with G-Cter in SUMO2) cross-link.

The protein belongs to the nuclear hormone receptor family. NR1 subfamily. Forms a heterodimer with RXR. Interacts with CCAR2 (via N-terminus) in a ligand-independent manner. Interacts (when sumoylated) with GPS2; interaction with GPS2 onto hepatic acute phase protein promoters prevents N-Cor corepressor complex dissociation. Interacts with ABCA12 and ABCA1; this interaction is required for ABCA1 localization to the cell surface and is necessary for its normal activity and stability. Sumoylated by SUMO2 at Lys-395 and Lys-433 during the hepatic acute phase response, leading to promote interaction with GPS2 and prevent N-Cor corepressor complex dissociation.

Its subcellular location is the nucleus. Functionally, nuclear receptor that exhibits a ligand-dependent transcriptional activation activity. Binds preferentially to double-stranded oligonucleotide direct repeats having the consensus half-site sequence 5'-AGGTCA-3' and 4-nt spacing (DR-4). Regulates cholesterol uptake through MYLIP-dependent ubiquitination of LDLR, VLDLR and LRP8; DLDLR and LRP8. Interplays functionally with RORA for the regulation of genes involved in liver metabolism. Induces LPCAT3-dependent phospholipid remodeling in endoplasmic reticulum (ER) membranes of hepatocytes, driving SREBF1 processing and lipogenesis. Via LPCAT3, triggers the incorporation of arachidonate into phosphatidylcholines of ER membranes, increasing membrane dynamics and enabling triacylglycerols transfer to nascent very low-density lipoprotein (VLDL) particles. Via LPCAT3 also counteracts lipid-induced ER stress response and inflammation, likely by modulating SRC kinase membrane compartmentalization and limiting the synthesis of lipid inflammatory mediators. Plays an anti-inflammatory role during the hepatic acute phase response by acting as a corepressor: inhibits the hepatic acute phase response by preventing dissociation of the N-Cor corepressor complex. In Rattus norvegicus (Rat), this protein is Oxysterols receptor LXR-beta (Nr1h2).